The sequence spans 465 residues: Ribulose bisphosphate carboxylase large chain (465 aa).

Lys-4 carries the N6,N6,N6-trimethyllysine modification. The substrate site is built by Asn-113 and Thr-163. The active-site Proton acceptor is the Lys-165. A substrate-binding site is contributed by Lys-167. 3 residues coordinate Mg(2+): Lys-191, Asp-193, and Glu-194. Residue Lys-191 is modified to N6-carboxylysine. The Proton acceptor role is filled by His-284. Arg-285, His-317, and Ser-369 together coordinate substrate.

This sequence belongs to the RuBisCO large chain family. Type I subfamily. As to quaternary structure, heterohexadecamer of 8 large chains and 8 small chains; disulfide-linked. The disulfide link is formed within the large subunit homodimers. Mg(2+) is required as a cofactor. The disulfide bond which can form in the large chain dimeric partners within the hexadecamer appears to be associated with oxidative stress and protein turnover.

The protein localises to the plastid. Its subcellular location is the chloroplast. It catalyses the reaction 2 (2R)-3-phosphoglycerate + 2 H(+) = D-ribulose 1,5-bisphosphate + CO2 + H2O. The enzyme catalyses D-ribulose 1,5-bisphosphate + O2 = 2-phosphoglycolate + (2R)-3-phosphoglycerate + 2 H(+). Its function is as follows. RuBisCO catalyzes two reactions: the carboxylation of D-ribulose 1,5-bisphosphate, the primary event in carbon dioxide fixation, as well as the oxidative fragmentation of the pentose substrate in the photorespiration process. Both reactions occur simultaneously and in competition at the same active site. In Humiria balsamifera (Tauroniro), this protein is Ribulose bisphosphate carboxylase large chain.